The primary structure comprises 60 residues: LKCNQLIPPFWKTCPKGKNLCYKMTMRAAPMVPVKRGCIDVCPKSSLLIKYMCCNTDKCN.

Disulfide bonds link Cys3–Cys21, Cys14–Cys38, Cys42–Cys53, and Cys54–Cys59.

This sequence belongs to the three-finger toxin family. Short-chain subfamily. Type IA cytotoxin sub-subfamily. In terms of assembly, monomer in solution; Homodimer and oligomer in the presence of negatively charged lipids forming a pore with a size ranging between 20 and 30 angstroms. Expressed by the venom gland.

It localises to the secreted. Its subcellular location is the target cell membrane. Functionally, basic protein that binds to cell membrane and depolarizes cardiomyocytes. This cytotoxin also possesses lytic activity on many other cells, including red blood cells. Interaction with sulfatides in the cell membrane induces pore formation and cell internalization and is responsible for cytotoxicity in cardiomyocytes. It targets the mitochondrial membrane and induces mitochondrial swelling and fragmentation. Inhibits protein kinases C. It binds to the integrin alpha-V/beta-3 with a moderate affinity. The chain is Cytotoxin 1 from Naja pallida (Red spitting cobra).